The chain runs to 274 residues: 2,3,4,5-tetrahydropyridine-2,6-dicarboxylate N-succinyltransferase (274 aa).

Belongs to the transferase hexapeptide repeat family.

It is found in the cytoplasm. The catalysed reaction is (S)-2,3,4,5-tetrahydrodipicolinate + succinyl-CoA + H2O = (S)-2-succinylamino-6-oxoheptanedioate + CoA. It participates in amino-acid biosynthesis; L-lysine biosynthesis via DAP pathway; LL-2,6-diaminopimelate from (S)-tetrahydrodipicolinate (succinylase route): step 1/3. The protein is 2,3,4,5-tetrahydropyridine-2,6-dicarboxylate N-succinyltransferase of Leptothrix cholodnii (strain ATCC 51168 / LMG 8142 / SP-6) (Leptothrix discophora (strain SP-6)).